A 769-amino-acid polypeptide reads, in one-letter code: TSC22 domain family protein 2 (769 aa).

Disordered stretches follow at residues 20–86 (AQVA…TVSP), 224–292 (HGLD…PQPM), 334–353 (AQPG…YPQP), and 520–563 (VPAP…SLPQ). The span at 28–37 (EDTESLDDPD) shows a compositional bias: acidic residues. Polar residues predominate over residues 229–252 (GTDSSLTAVSQLPPSEKMSQPTLA). Positions 269 to 279 (GGAVAPSSASL) are enriched in low complexity. A compositionally biased stretch (low complexity) spans 531-541 (SSHTPVSRSSS). The segment covering 542–563 (VIQQVGSPLAQGTHSAPTSLPQ) has biased composition (polar residues). The stretch at 691–725 (MYAVREEVEVLKEQIKELVERNSLLERENALLKSL) forms a coiled coil. The segment covering 726 to 745 (SNNDQLSQLPAQQANPGSTS) has biased composition (polar residues). The disordered stretch occupies residues 726–769 (SNNDQLSQLPAQQANPGSTSQQQAMIAQPPQPTQPPQQPNVSSA). The span at 754–763 (PPQPTQPPQQ) shows a compositional bias: pro residues.

It belongs to the TSC-22/Dip/Bun family. Interacts with NRBP1. Interacts with PKM isoform M2; the interaction results in reduced nuclear levels of PKM isoform M2, leading to repression of cyclin CCND1 transcription and reduced cell growth. Interacts with WDR77. As to expression, expressed in the cortex, medulla and papilla of the kidney. Expressed in the kidney.

In terms of biological role, reduces the level of nuclear PKM isoform M2 which results in repression of cyclin CCND1 transcription and reduced cell growth. Functionally, may protect kidney cells from hyperosmotic stress. This chain is TSC22 domain family protein 2, found in Mus musculus (Mouse).